The following is a 311-amino-acid chain: Prohibitin-2 (311 aa).

The helical transmembrane segment at 39 to 57 (GAGMGLAGLVLLGGAAFVA) threads the bilayer. Residues 141-144 (YRTL) carry the AIM motif.

This sequence belongs to the prohibitin family. As to quaternary structure, the mitochondrial prohibitin complex consists of two subunits (PHB1 and PHB2). The subunits assemble into a membrane-associated ring-shaped supercomplex of approximately 1 mDa. Interacts with ATG24/SNX4; the interaction is direct and plays a role in mitophagy.

The protein resides in the mitochondrion inner membrane. Its function is as follows. Prohibitin probably acts as a holdase/unfoldase for the stabilization of newly synthesized mitochondrial proteins. Involved in mitophagy. Required for the switch to necrotrophic growth. This chain is Prohibitin-2, found in Colletotrichum higginsianum (strain IMI 349063) (Crucifer anthracnose fungus).